The following is a 101-amino-acid chain: Aspartyl/glutamyl-tRNA(Asn/Gln) amidotransferase subunit C (101 aa).

The protein belongs to the GatC family. As to quaternary structure, heterotrimer of A, B and C subunits.

It carries out the reaction L-glutamyl-tRNA(Gln) + L-glutamine + ATP + H2O = L-glutaminyl-tRNA(Gln) + L-glutamate + ADP + phosphate + H(+). It catalyses the reaction L-aspartyl-tRNA(Asn) + L-glutamine + ATP + H2O = L-asparaginyl-tRNA(Asn) + L-glutamate + ADP + phosphate + 2 H(+). Functionally, allows the formation of correctly charged Asn-tRNA(Asn) or Gln-tRNA(Gln) through the transamidation of misacylated Asp-tRNA(Asn) or Glu-tRNA(Gln) in organisms which lack either or both of asparaginyl-tRNA or glutaminyl-tRNA synthetases. The reaction takes place in the presence of glutamine and ATP through an activated phospho-Asp-tRNA(Asn) or phospho-Glu-tRNA(Gln). The sequence is that of Aspartyl/glutamyl-tRNA(Asn/Gln) amidotransferase subunit C from Enterococcus faecalis (strain ATCC 700802 / V583).